Reading from the N-terminus, the 264-residue chain is Outer kinetochore KNL1 complex subunit sos7 (264 aa).

Positions E90–T236 form a coiled coil.

The protein belongs to the KRE28 family. In terms of assembly, component of the KNL1/SPC105 complex composed of at least spc7 and sos7. Part of the outer kinetochore KMN network that includes the KNL1, MIS12 and NDC80 complexes. Interacts (via C-terminus) with spc7 (via C-terminus); the interaction is direct.

It is found in the nucleus. The protein localises to the chromosome. Its subcellular location is the centromere. It localises to the kinetochore. In terms of biological role, acts as a component of the outer kinetochore KNL1 complex that facilitates microtubule-kinetochore interactions and the spindle assembly checkpoint. Kinetochores, consisting of a centromere-associated inner segment and a microtubule-contacting outer segment, play a crucial role in chromosome segregation by mediating the physical connection between centromeric DNA and spindle microtubules. The outer kinetochore is made up of the ten-subunit KMN network, comprising the MIS12, NDC80 and KNL1 complexes, and auxiliary microtubule-associated components; together they connect the outer kinetochore with the inner kinetochore, bind microtubules, and mediate interactions with mitotic checkpoint proteins that delay anaphase until chromosomes are bioriented on the spindle. The sequence is that of Outer kinetochore KNL1 complex subunit sos7 (sos7) from Schizosaccharomyces pombe (strain 972 / ATCC 24843) (Fission yeast).